Here is a 427-residue protein sequence, read N- to C-terminus: Serine hydroxymethyltransferase (427 aa).

Residue 120–122 coordinates (6S)-5,6,7,8-tetrahydrofolate; the sequence is GHI. K226 bears the N6-(pyridoxal phosphate)lysine mark.

Belongs to the SHMT family. In terms of assembly, homodimer. Pyridoxal 5'-phosphate is required as a cofactor.

It is found in the cytoplasm. The protein operates within amino-acid biosynthesis; glycine biosynthesis; glycine from L-serine: step 1/1. Functionally, catalyzes the reversible interconversion of serine and glycine with a modified folate serving as the one-carbon carrier. Also exhibits a pteridine-independent aldolase activity toward beta-hydroxyamino acids, producing glycine and aldehydes, via a retro-aldol mechanism. This Pyrococcus abyssi (strain GE5 / Orsay) protein is Serine hydroxymethyltransferase.